A 359-amino-acid chain; its full sequence is 3-dehydroquinate synthase (359 aa).

Residues 72-77, 106-110, 130-131, Lys143, Lys152, and 170-173 each bind NAD(+); these read EGEIHK, GVIGD, TS, and CLKT. Glu185, His248, and His264 together coordinate Zn(2+).

It belongs to the sugar phosphate cyclases superfamily. Dehydroquinate synthase family. Requires Co(2+) as cofactor. Zn(2+) is required as a cofactor. It depends on NAD(+) as a cofactor.

Its subcellular location is the cytoplasm. It catalyses the reaction 7-phospho-2-dehydro-3-deoxy-D-arabino-heptonate = 3-dehydroquinate + phosphate. Its pathway is metabolic intermediate biosynthesis; chorismate biosynthesis; chorismate from D-erythrose 4-phosphate and phosphoenolpyruvate: step 2/7. In terms of biological role, catalyzes the conversion of 3-deoxy-D-arabino-heptulosonate 7-phosphate (DAHP) to dehydroquinate (DHQ). In Dehalococcoides mccartyi (strain ATCC BAA-2266 / KCTC 15142 / 195) (Dehalococcoides ethenogenes (strain 195)), this protein is 3-dehydroquinate synthase.